Reading from the N-terminus, the 481-residue chain is MTNLSLDGRFARELPEMAVRWKAEEAPDPRLLVLNDELASGLGLDADWLRSPDGVRLLVGNSVPDGATPVAQAYAGHQFGGFAPRLGDGRALLLGELVDGDGRMRDVHLKGSGHTPFARAGDGLAAVGPMLREYLVSEAMHALGIPTTRSLAVVATGRPVRRESVLDGAVLTRVASSHLRVGSFQYAAVTGDTDLVRRLAGHAIARHHPEVAGAADPYLGLFEAVCSAQAQLIARWMLVGFVHGVMNTDNMTISGETIDYGPCAFMDVYDPETVFSSIDSWGRYAYGNQPSIAAWNLARFAETLLPLFDDDIDRAITLAQNALGAFGRHYEGALTAGMQAKLGLTGVDGPAVAPLLDELLKLLQDNHIDFTSFFRALGLAARGDNEPVRGLFVDLAGFDAWLDSWRALGPDGAAMDRVNPVYIPRNHLVEEALTAAAAGDMEPFETLLDAVTGPFDERPGLQRYAEPAPEAFGRYRTFCGT.

ATP is bound by residues G87, G89, R90, K110, D122, G123, R173, and R180. D249 serves as the catalytic Proton acceptor. Mg(2+) contacts are provided by N250 and D259. ATP is bound at residue D259.

Belongs to the SELO family. Requires Mg(2+) as cofactor. It depends on Mn(2+) as a cofactor.

The catalysed reaction is L-seryl-[protein] + ATP = 3-O-(5'-adenylyl)-L-seryl-[protein] + diphosphate. It carries out the reaction L-threonyl-[protein] + ATP = 3-O-(5'-adenylyl)-L-threonyl-[protein] + diphosphate. It catalyses the reaction L-tyrosyl-[protein] + ATP = O-(5'-adenylyl)-L-tyrosyl-[protein] + diphosphate. The enzyme catalyses L-histidyl-[protein] + UTP = N(tele)-(5'-uridylyl)-L-histidyl-[protein] + diphosphate. The catalysed reaction is L-seryl-[protein] + UTP = O-(5'-uridylyl)-L-seryl-[protein] + diphosphate. It carries out the reaction L-tyrosyl-[protein] + UTP = O-(5'-uridylyl)-L-tyrosyl-[protein] + diphosphate. Nucleotidyltransferase involved in the post-translational modification of proteins. It can catalyze the addition of adenosine monophosphate (AMP) or uridine monophosphate (UMP) to a protein, resulting in modifications known as AMPylation and UMPylation. This chain is Protein nucleotidyltransferase YdiU, found in Mycobacterium sp. (strain KMS).